A 366-amino-acid chain; its full sequence is Phosphoserine aminotransferase (366 aa).

Arg42 contacts L-glutamate. Pyridoxal 5'-phosphate is bound by residues Ala76–Thr77, Trp101, Thr156, Asp178, and Gln201. Position 202 is an N6-(pyridoxal phosphate)lysine (Lys202). Pyridoxal 5'-phosphate is bound at residue Asn243–Thr244.

Belongs to the class-V pyridoxal-phosphate-dependent aminotransferase family. SerC subfamily. Homodimer. It depends on pyridoxal 5'-phosphate as a cofactor.

It is found in the cytoplasm. It catalyses the reaction O-phospho-L-serine + 2-oxoglutarate = 3-phosphooxypyruvate + L-glutamate. The catalysed reaction is 4-(phosphooxy)-L-threonine + 2-oxoglutarate = (R)-3-hydroxy-2-oxo-4-phosphooxybutanoate + L-glutamate. Its pathway is amino-acid biosynthesis; L-serine biosynthesis; L-serine from 3-phospho-D-glycerate: step 2/3. It functions in the pathway cofactor biosynthesis; pyridoxine 5'-phosphate biosynthesis; pyridoxine 5'-phosphate from D-erythrose 4-phosphate: step 3/5. Functionally, catalyzes the reversible conversion of 3-phosphohydroxypyruvate to phosphoserine and of 3-hydroxy-2-oxo-4-phosphonooxybutanoate to phosphohydroxythreonine. This chain is Phosphoserine aminotransferase, found in Aromatoleum aromaticum (strain DSM 19018 / LMG 30748 / EbN1) (Azoarcus sp. (strain EbN1)).